The following is a 200-amino-acid chain: Peptidyl-tRNA hydrolase (200 aa).

Tyrosine 16 is a tRNA binding site. Histidine 21 acts as the Proton acceptor in catalysis. Positions 67, 69, and 115 each coordinate tRNA.

This sequence belongs to the PTH family. Monomer.

Its subcellular location is the cytoplasm. The enzyme catalyses an N-acyl-L-alpha-aminoacyl-tRNA + H2O = an N-acyl-L-amino acid + a tRNA + H(+). In terms of biological role, hydrolyzes ribosome-free peptidyl-tRNAs (with 1 or more amino acids incorporated), which drop off the ribosome during protein synthesis, or as a result of ribosome stalling. Catalyzes the release of premature peptidyl moieties from peptidyl-tRNA molecules trapped in stalled 50S ribosomal subunits, and thus maintains levels of free tRNAs and 50S ribosomes. This Prochlorococcus marinus (strain MIT 9312) protein is Peptidyl-tRNA hydrolase.